A 308-amino-acid chain; its full sequence is ABC transporter protein AbcA (308 aa).

Residues Leu-6–Asp-245 form the ABC transporter domain. Residue Gly-58–Ser-65 participates in ATP binding.

Belongs to the ABC transporter superfamily.

Its function is as follows. Influences the expression of the surface array protein gene (vapA). May have both regulatory and transport activities. This Aeromonas salmonicida protein is ABC transporter protein AbcA (abcA).